The following is a 311-amino-acid chain: Vomeronasal type-1 receptor 3 (311 aa).

Residues 1-5 (MASKD) are Extracellular-facing. The helical transmembrane segment at 6 to 26 (FAIGMILLSQIMVGFLGNFFL) threads the bilayer. The Cytoplasmic portion of the chain corresponds to 27 to 51 (LYHYSFLCFTRGMLQSTDLILKHLT). The helical transmembrane segment at 52-72 (IANSLVILSKGIPQTMAAFGL) threads the bilayer. The Extracellular portion of the chain corresponds to 73 to 92 (KDSLSDIGCKFVFYVHRVGR). A helical transmembrane segment spans residues 93–113 (AVCVGNACLLSVFQVITISPS). Residues 114–130 (EFRWAELKLHAHKYIRS) are Cytoplasmic-facing. The chain crosses the membrane as a helical span at residues 131-151 (FILVLCWILNTLVNITVLLHV). Residues 152–187 (TGKWNSINSTKTNDYGYCSGGSRSRIPHSLHIVLLS) lie on the Extracellular side of the membrane. Residue Asn159 is glycosylated (N-linked (GlcNAc...) asparagine). A helical transmembrane segment spans residues 188–208 (SLDVLCLGLMTLASGSMVFIL). The Cytoplasmic segment spans residues 209 to 232 (HRHKQQVQHIHGTNLSARSSPESR). Residues 233–249 (VTQSILVLVSTLCYFTR) form a helical membrane-spanning segment. Topologically, residues 250 to 264 (SPPSLHMSLFPNPSW) are extracellular. The helical transmembrane segment at 265-285 (WLLNTSALITACFPMVSPFVL) threads the bilayer. Over 286 to 311 (MSRHPRIPRLGSACCGRNPQFPKLVR) the chain is Cytoplasmic.

The protein belongs to the G-protein coupled receptor 1 family.

The protein localises to the cell membrane. In terms of biological role, putative pheromone receptor. This is Vomeronasal type-1 receptor 3 (VN1R3) from Homo sapiens (Human).